Consider the following 210-residue polypeptide: Glutathione S-transferase P 2 (210 aa).

The GST N-terminal domain maps to 2-81 (PPYTIVYFPS…HLGRSLGLYG (80 aa)). Glutathione is bound by residues Tyr-8, Arg-14, Trp-39, Lys-45, 52–53 (QL), and 65–66 (QS). Residues 83 to 204 (NQREAAQVDM…SSPEHVNRPI (122 aa)) enclose the GST C-terminal domain.

The protein belongs to the GST superfamily. Pi family. In terms of assembly, homodimer. In terms of tissue distribution, selectively expressed in gall bladder, colon, heart, and skeletal muscle.

It catalyses the reaction RX + glutathione = an S-substituted glutathione + a halide anion + H(+). Its function is as follows. Conjugation of reduced glutathione to a wide number of exogenous and endogenous hydrophobic electrophiles. Cannot metabolize 1-chloro-2,4-dinitrobenzene. This Mus musculus (Mouse) protein is Glutathione S-transferase P 2 (Gstp2).